Reading from the N-terminus, the 332-residue chain is uncharacterized protein (332 aa).

The protein belongs to the peptidase U32 family.

This is an uncharacterized protein from Methanocaldococcus jannaschii (strain ATCC 43067 / DSM 2661 / JAL-1 / JCM 10045 / NBRC 100440) (Methanococcus jannaschii).